The primary structure comprises 544 residues: Chaperonin GroEL (544 aa).

ATP contacts are provided by residues 30–33 (TLGP), Lys-51, 87–91 (DGTTT), Gly-415, and Asp-495.

Belongs to the chaperonin (HSP60) family. Forms a cylinder of 14 subunits composed of two heptameric rings stacked back-to-back. Interacts with the co-chaperonin GroES.

The protein localises to the cytoplasm. It catalyses the reaction ATP + H2O + a folded polypeptide = ADP + phosphate + an unfolded polypeptide.. Functionally, together with its co-chaperonin GroES, plays an essential role in assisting protein folding. The GroEL-GroES system forms a nano-cage that allows encapsulation of the non-native substrate proteins and provides a physical environment optimized to promote and accelerate protein folding. The polypeptide is Chaperonin GroEL (Bartonella bacilliformis).